Reading from the N-terminus, the 219-residue chain is tRNA (guanine-N(7)-)-methyltransferase (219 aa).

Residues E46, E71, D100, and D122 each coordinate S-adenosyl-L-methionine. D122 is an active-site residue. K126 lines the substrate pocket. The interaction with RNA stretch occupies residues 128-133 (KHEKRR). Residues D158 and 199–202 (TEYE) each bind substrate.

This sequence belongs to the class I-like SAM-binding methyltransferase superfamily. TrmB family.

It carries out the reaction guanosine(46) in tRNA + S-adenosyl-L-methionine = N(7)-methylguanosine(46) in tRNA + S-adenosyl-L-homocysteine. Its pathway is tRNA modification; N(7)-methylguanine-tRNA biosynthesis. Catalyzes the formation of N(7)-methylguanine at position 46 (m7G46) in tRNA. The sequence is that of tRNA (guanine-N(7)-)-methyltransferase from Oenococcus oeni (strain ATCC BAA-331 / PSU-1).